Reading from the N-terminus, the 180-residue chain is High mobility group protein B1 (180 aa).

Positions valine 1 to lysine 8 match the Nuclear localization signal (NLS) 1 motif. The segment at residues valine 1–isoleucine 44 is a DNA-binding region (HMG box 1). Position 8 is an N6-acetyllysine (lysine 8). Isoglutamyl lysine isopeptide (Lys-Gln) (interchain with Q-?) cross-links involve residues lysine 8 and lysine 9. Cysteine 10 carries the cysteine sulfonic acid (-SO3H) modification. Lysine 33 is covalently cross-linked (Isoglutamyl lysine isopeptide (Lys-Gln) (interchain with Q-?)). The tract at residues proline 45–lysine 61 is LPS binding (Lipid A). The interval phenylalanine 54–glutamate 73 is cytokine-stimulating activity. N6-acetyllysine is present on lysine 55. The HMG box 2 DNA-binding region spans proline 60 to arginine 128. Serine 65 is subject to Phosphoserine. Cysteine 71 carries the cysteine sulfonic acid (-SO3H) modification. An N6-acetyllysine mark is found at lysine 92, lysine 93, lysine 106, lysine 137, lysine 138, lysine 142, and lysine 145. Positions lysine 115 to lysine 148 are binding to AGER/RAGE. A compositionally biased stretch (basic and acidic residues) spans alanine 126–glutamate 144. The tract at residues alanine 126–glutamate 180 is disordered. Positions alanine 143–lysine 149 match the Nuclear localization signal (NLS) 2 motif. The segment at alanine 143 to lysine 149 is NLS 2. Lysine 145 is covalently cross-linked (Isoglutamyl lysine isopeptide (Lys-Gln) (interchain with Q-?)). Serine 146 is subject to ADP-ribosylserine. Lysine 147, lysine 148, lysine 149, and lysine 150 each carry N6-acetyllysine. Isoglutamyl lysine isopeptide (Lys-Gln) (interchain with Q-?) cross-links involve residues lysine 147, lysine 148, and lysine 149. Acidic residues predominate over residues glutamate 152–glutamate 180.

Belongs to the HMGB family. In terms of assembly, interacts (fully reduced HMGB1) with CXCL12; probably in a 1:2 ratio involving two molecules of CXCL12, each interacting with one HMG box of HMGB1; inhibited by glycyrrhizin. Associates with the TLR4:LY96 receptor complex. Component of the RAG complex composed of core components RAG1 and RAG2, and associated component HMGB1 or HMGB2. Interacts (in cytoplasm upon starvation) with BECN1; inhibits the interaction of BECN1 and BCL2 leading to promotion of autophagy. Interacts with KPNA1; involved in nuclear import. Interacts with SREBF1, TLR2, TLR4, TLR9, PTPRZ1, APEX1, FEN1, POLB, TERT. Interacts with IL1B, AGER, MSH2, XPA, XPC, HNF1A, TP53. Interacts with CD24; the probable CD24:SIGLEC10 complex is proposed to inhibit HGMB1-mediated tissue damage immune response. Interacts with THBD; prevents HGMB1 interaction with ACER/RAGE and inhibits HGMB1 pro-inflammatory activity. Interacts with HAVCR2; impairs HMGB1 binding to B-DNA and likely HMGB1-mediated innate immune response. Interacts with XPO1; mediating nuclear export. Interacts with receptor RAGE/AGER. Phosphorylated at serine residues. Phosphorylation in both NLS regions is required for cytoplasmic translocation followed by secretion. In terms of processing, acetylated on multiple sites upon stimulation with LPS. Acetylation on lysine residues in the nuclear localization signals (NLS 1 and NLS 2) leads to cytoplasmic localization and subsequent secretion. Post-translationally, reduction/oxidation of cysteine residues and a possible intramolecular disulfide bond give rise to different redox forms with specific functional activities in various cellular compartments: 1- fully reduced HMGB1 (HMGB1C23hC45hC106h), 2-disulfide HMGB1 (HMGB1C23-C45C106h) and 3- sulfonyl HMGB1 (HMGB1C23soC45soC106so). Poly-ADP-ribosylated by PARP1 when secreted following stimulation with LPS. In terms of processing, in vitro cleavage by CASP1 is liberating a HMG box 1-containing peptide which may mediate immunogenic activity; the peptide antagonizes apoptosis-induced immune tolerance. Can be proteolytically cleaved by a thrombin:thrombomodulin complex; reduces binding to heparin and pro-inflammatory activities. Post-translationally, forms covalent cross-links mediated by transglutaminase TGM2, between a glutamine and the epsilon-amino group of a lysine residue, forming homopolymers and heteropolymers.

It is found in the nucleus. The protein localises to the chromosome. Its subcellular location is the cytoplasm. The protein resides in the secreted. It localises to the cell membrane. It is found in the endosome. The protein localises to the endoplasmic reticulum-Golgi intermediate compartment. Functionally, multifunctional redox sensitive protein with various roles in different cellular compartments. In the nucleus is one of the major chromatin-associated non-histone proteins and acts as a DNA chaperone involved in replication, transcription, chromatin remodeling, V(D)J recombination, DNA repair and genome stability. Proposed to be an universal biosensor for nucleic acids. Promotes host inflammatory response to sterile and infectious signals and is involved in the coordination and integration of innate and adaptive immune responses. In the cytoplasm functions as a sensor and/or chaperone for immunogenic nucleic acids implicating the activation of TLR9-mediated immune responses, and mediates autophagy. Acts as a danger-associated molecular pattern (DAMP) molecule that amplifies immune responses during tissue injury. Released to the extracellular environment can bind DNA, nucleosomes, IL-1 beta, CXCL12, AGER isoform 2/sRAGE, lipopolysaccharide (LPS) and lipoteichoic acid (LTA), and activates cells through engagement of multiple surface receptors. In the extracellular compartment fully reduced HMGB1 (released by necrosis) acts as a chemokine, disulfide HMGB1 (actively secreted) as a cytokine, and sulfonyl HMGB1 (released from apoptotic cells) promotes immunological tolerance. Has proangiogenic activity. May be involved in platelet activation. Binds to phosphatidylserine and phosphatidylethanolamide. Bound to RAGE mediates signaling for neuronal outgrowth. May play a role in accumulation of expanded polyglutamine (polyQ) proteins. In terms of biological role, nuclear functions are attributed to fully reduced HGMB1. Associates with chromatin and binds DNA with a preference to non-canonical DNA structures such as single-stranded DNA, DNA-containing cruciforms or bent structures, supercoiled DNA and ZDNA. Can bent DNA and enhance DNA flexibility by looping thus providing a mechanism to promote activities on various gene promoters by enhancing transcription factor binding and/or bringing distant regulatory sequences into close proximity. May be involved in nucleotide excision repair (NER), mismatch repair (MMR) and base excision repair (BER) pathways, and double strand break repair such as non-homologous end joining (NHEJ). Involved in V(D)J recombination by acting as a cofactor of the RAG complex: acts by stimulating cleavage and RAG protein binding at the 23 bp spacer of conserved recombination signal sequences (RSS). In vitro can displace histone H1 from highly bent DNA. Can restructure the canonical nucleosome leading to relaxation of structural constraints for transcription factor-binding. Enhances binding of sterol regulatory element-binding proteins (SREBPs) such as SREBF1 to their cognate DNA sequences and increases their transcriptional activities. Facilitates binding of TP53 to DNA. May be involved in mitochondrial quality control and autophagy in a transcription-dependent fashion implicating HSPB1. Can modulate the activity of the telomerase complex and may be involved in telomere maintenance. In the cytoplasm proposed to dissociate the BECN1:BCL2 complex via competitive interaction with BECN1 leading to autophagy activation. Can protect BECN1 and ATG5 from calpain-mediated cleavage and thus proposed to control their proautophagic and proapoptotic functions and to regulate the extent and severity of inflammation-associated cellular injury. In myeloid cells has a protective role against endotoxemia and bacterial infection by promoting autophagy. Involved in endosomal translocation and activation of TLR9 in response to CpG-DNA in macrophages. Its function is as follows. In the extracellular compartment (following either active secretion or passive release) involved in regulation of the inflammatory response. Fully reduced HGMB1 (which subsequently gets oxidized after release) in association with CXCL12 mediates the recruitment of inflammatory cells during the initial phase of tissue injury; the CXCL12:HMGB1 complex triggers CXCR4 homodimerization. Induces the migration of monocyte-derived immature dendritic cells and seems to regulate adhesive and migratory functions of neutrophils implicating AGER/RAGE and ITGAM. Can bind to various types of DNA and RNA including microbial unmethylated CpG-DNA to enhance the innate immune response to nucleic acids. Proposed to act in promiscuous DNA/RNA sensing which cooperates with subsequent discriminative sensing by specific pattern recognition receptors. Promotes extracellular DNA-induced AIM2 inflammasome activation implicating AGER/RAGE. Disulfide HMGB1 binds to transmembrane receptors, such as AGER/RAGE, TLR2, TLR4 and probably TREM1, thus activating their signal transduction pathways. Mediates the release of cytokines/chemokines such as TNF, IL-1, IL-6, IL-8, CCL2, CCL3, CCL4 and CXCL10. Promotes secretion of interferon-gamma by macrophage-stimulated natural killer (NK) cells in concert with other cytokines like IL-2 or IL-12. TLR4 is proposed to be the primary receptor promoting macrophage activation and signaling through TLR4 seems to implicate LY96/MD-2. In bacterial LPS- or LTA-mediated inflammatory responses binds to the endotoxins and transfers them to CD14 for signaling to the respective TLR4:LY96 and TLR2 complexes. Contributes to tumor proliferation by association with ACER/RAGE. Can bind to IL1-beta and signals through the IL1R1:IL1RAP receptor complex. Binding to class A CpG activates cytokine production in plasmacytoid dendritic cells implicating TLR9, MYD88 and AGER/RAGE and can activate autoreactive B cells. Via HMGB1-containing chromatin immune complexes may also promote B cell responses to endogenous TLR9 ligands through a B-cell receptor (BCR)-dependent and ACER/RAGE-independent mechanism. Inhibits phagocytosis of apoptotic cells by macrophages; the function is dependent on poly-ADP-ribosylation and involves binding to phosphatidylserine on the cell surface of apoptotic cells. In adaptive immunity may be involved in enhancing immunity through activation of effector T-cells and suppression of regulatory T (TReg) cells. In contrast, without implicating effector or regulatory T-cells, required for tumor infiltration and activation of T-cells expressing the lymphotoxin LTA:LTB heterotrimer thus promoting tumor malignant progression. Also reported to limit proliferation of T-cells. Released HMGB1:nucleosome complexes formed during apoptosis can signal through TLR2 to induce cytokine production. Involved in induction of immunological tolerance by apoptotic cells; its pro-inflammatory activities when released by apoptotic cells are neutralized by reactive oxygen species (ROS)-dependent oxidation specifically on Cys-106. During macrophage activation by activated lymphocyte-derived self apoptotic DNA (ALD-DNA) promotes recruitment of ALD-DNA to endosomes. This Cricetulus griseus (Chinese hamster) protein is High mobility group protein B1 (HMGB1).